The chain runs to 186 residues: Peptide deformylase (186 aa).

The Fe cation site is built by cysteine 113 and histidine 157. Glutamate 158 is an active-site residue. A Fe cation-binding site is contributed by histidine 161.

This sequence belongs to the polypeptide deformylase family. The cofactor is Fe(2+).

It catalyses the reaction N-terminal N-formyl-L-methionyl-[peptide] + H2O = N-terminal L-methionyl-[peptide] + formate. In terms of biological role, removes the formyl group from the N-terminal Met of newly synthesized proteins. Requires at least a dipeptide for an efficient rate of reaction. N-terminal L-methionine is a prerequisite for activity but the enzyme has broad specificity at other positions. The chain is Peptide deformylase from Malacoplasma penetrans (strain HF-2) (Mycoplasma penetrans).